The chain runs to 414 residues: Probable 26S proteasome regulatory subunit 6B (414 aa).

202–209 (GPPGCGKT) contributes to the ATP binding site.

It belongs to the AAA ATPase family.

The protein resides in the cytoplasm. Its subcellular location is the nucleus. Functionally, the 26S proteasome is involved in the ATP-dependent degradation of ubiquitinated proteins. The regulatory (or ATPase) complex confers ATP dependency and substrate specificity to the 26S complex. This chain is Probable 26S proteasome regulatory subunit 6B (rpt-3), found in Caenorhabditis elegans.